A 737-amino-acid polypeptide reads, in one-letter code: Polyribonucleotide nucleotidyltransferase (737 aa).

Mg(2+) contacts are provided by Asp-489 and Asp-495. One can recognise a KH domain in the interval 556 to 615 (PKIDTIKIDVDKIKIVIGKGGETIDKIIAETGVKIDIDEEGNVSIYSSDQDAINRAKEII). Positions 625-693 (DEVYRAKVVR…EKGRIDASMK (69 aa)) constitute an S1 motif domain. The segment at 691 to 737 (SMKALLPRPPKPEHDEKGEKSERPHRPRHQKDYKPKKEFTETPKDSE) is disordered. A compositionally biased stretch (basic and acidic residues) spans 700-737 (PKPEHDEKGEKSERPHRPRHQKDYKPKKEFTETPKDSE).

It belongs to the polyribonucleotide nucleotidyltransferase family. The cofactor is Mg(2+).

The protein resides in the cytoplasm. The enzyme catalyses RNA(n+1) + phosphate = RNA(n) + a ribonucleoside 5'-diphosphate. Involved in mRNA degradation. Catalyzes the phosphorolysis of single-stranded polyribonucleotides processively in the 3'- to 5'-direction. This Streptococcus pneumoniae serotype 2 (strain D39 / NCTC 7466) protein is Polyribonucleotide nucleotidyltransferase.